A 232-amino-acid polypeptide reads, in one-letter code: 5'-methylthioadenosine/S-adenosylhomocysteine nucleosidase (232 aa).

Catalysis depends on Glu-12, which acts as the Proton acceptor. Substrate-binding positions include Gly-78, Ile-152, and 173–174 (ME). The Proton donor role is filled by Asp-197.

The protein belongs to the PNP/UDP phosphorylase family. MtnN subfamily. In terms of assembly, homodimer.

The enzyme catalyses S-adenosyl-L-homocysteine + H2O = S-(5-deoxy-D-ribos-5-yl)-L-homocysteine + adenine. It catalyses the reaction S-methyl-5'-thioadenosine + H2O = 5-(methylsulfanyl)-D-ribose + adenine. It carries out the reaction 5'-deoxyadenosine + H2O = 5-deoxy-D-ribose + adenine. It participates in amino-acid biosynthesis; L-methionine biosynthesis via salvage pathway; S-methyl-5-thio-alpha-D-ribose 1-phosphate from S-methyl-5'-thioadenosine (hydrolase route): step 1/2. Its function is as follows. Catalyzes the irreversible cleavage of the glycosidic bond in both 5'-methylthioadenosine (MTA) and S-adenosylhomocysteine (SAH/AdoHcy) to adenine and the corresponding thioribose, 5'-methylthioribose and S-ribosylhomocysteine, respectively. Also cleaves 5'-deoxyadenosine, a toxic by-product of radical S-adenosylmethionine (SAM) enzymes, into 5-deoxyribose and adenine. Thus, is required for in vivo function of the radical SAM enzymes biotin synthase and lipoic acid synthase, that are inhibited by 5'-deoxyadenosine accumulation. The sequence is that of 5'-methylthioadenosine/S-adenosylhomocysteine nucleosidase from Cronobacter sakazakii (strain ATCC BAA-894) (Enterobacter sakazakii).